A 186-amino-acid chain; its full sequence is Ribosome-recycling factor (186 aa).

Residues 135 to 164 (DGMDDLKKAEKDGEIGQDESRAQSERVQKM) are disordered.

The protein belongs to the RRF family.

It is found in the cytoplasm. Responsible for the release of ribosomes from messenger RNA at the termination of protein biosynthesis. May increase the efficiency of translation by recycling ribosomes from one round of translation to another. The chain is Ribosome-recycling factor from Rhizobium meliloti (strain 1021) (Ensifer meliloti).